A 47-amino-acid polypeptide reads, in one-letter code: U18-ctenitoxin-Pn1a (47 aa).

5 disulfide bridges follow: cysteine 2–cysteine 16, cysteine 9–cysteine 22, cysteine 13–cysteine 46, cysteine 15–cysteine 34, and cysteine 24–cysteine 32.

As to expression, expressed by the venom gland.

It is found in the secreted. Neurotoxin. Causes spastic paralysis and death in mice by intracerebroventricular injection at dose levels of 3 ug per mouse. This Phoneutria nigriventer (Brazilian armed spider) protein is U18-ctenitoxin-Pn1a.